Consider the following 477-residue polypeptide: Ribulose bisphosphate carboxylase large chain (477 aa).

The propeptide occupies 1 to 2; it reads MS. P3 carries the N-acetylproline modification. At K14 the chain carries N6,N6,N6-trimethyllysine. Residues N123 and T173 each coordinate substrate. Residue K175 is the Proton acceptor of the active site. K177 provides a ligand contact to substrate. K201, D203, and E204 together coordinate Mg(2+). K201 bears the N6-carboxylysine mark. The Proton acceptor role is filled by H294. 3 residues coordinate substrate: R295, H327, and S379.

This sequence belongs to the RuBisCO large chain family. Type I subfamily. In terms of assembly, heterohexadecamer of 8 large chains and 8 small chains; disulfide-linked. The disulfide link is formed within the large subunit homodimers. Mg(2+) is required as a cofactor. In terms of processing, the disulfide bond which can form in the large chain dimeric partners within the hexadecamer appears to be associated with oxidative stress and protein turnover.

The protein localises to the plastid. Its subcellular location is the chloroplast. It carries out the reaction 2 (2R)-3-phosphoglycerate + 2 H(+) = D-ribulose 1,5-bisphosphate + CO2 + H2O. It catalyses the reaction D-ribulose 1,5-bisphosphate + O2 = 2-phosphoglycolate + (2R)-3-phosphoglycerate + 2 H(+). Functionally, ruBisCO catalyzes two reactions: the carboxylation of D-ribulose 1,5-bisphosphate, the primary event in carbon dioxide fixation, as well as the oxidative fragmentation of the pentose substrate in the photorespiration process. Both reactions occur simultaneously and in competition at the same active site. In Nicotiana debneyi (Debney's tobacco), this protein is Ribulose bisphosphate carboxylase large chain.